The sequence spans 487 residues: Glutamyl-tRNA(Gln) amidotransferase subunit A (487 aa).

Catalysis depends on charge relay system residues Lys77 and Ser152. Catalysis depends on Ser176, which acts as the Acyl-ester intermediate.

It belongs to the amidase family. GatA subfamily. As to quaternary structure, heterotrimer of A, B and C subunits.

The catalysed reaction is L-glutamyl-tRNA(Gln) + L-glutamine + ATP + H2O = L-glutaminyl-tRNA(Gln) + L-glutamate + ADP + phosphate + H(+). In terms of biological role, allows the formation of correctly charged Gln-tRNA(Gln) through the transamidation of misacylated Glu-tRNA(Gln) in organisms which lack glutaminyl-tRNA synthetase. The reaction takes place in the presence of glutamine and ATP through an activated gamma-phospho-Glu-tRNA(Gln). The polypeptide is Glutamyl-tRNA(Gln) amidotransferase subunit A (Lysinibacillus sphaericus (strain C3-41)).